The sequence spans 287 residues: Large ribosomal subunit protein uL2 (287 aa).

The disordered stretch occupies residues 221–287 (RGSVMNPCDH…SKRSRGGRDS (67 aa)). Basic residues predominate over residues 258 to 287 (KTRKKNKPSNKLVVRRRRRISKRSRGGRDS).

This sequence belongs to the universal ribosomal protein uL2 family. In terms of assembly, part of the 50S ribosomal subunit. Forms a bridge to the 30S subunit in the 70S ribosome.

Its function is as follows. One of the primary rRNA binding proteins. Required for association of the 30S and 50S subunits to form the 70S ribosome, for tRNA binding and peptide bond formation. It has been suggested to have peptidyltransferase activity; this is somewhat controversial. Makes several contacts with the 16S rRNA in the 70S ribosome. The chain is Large ribosomal subunit protein uL2 from Prochlorococcus marinus (strain MIT 9215).